Reading from the N-terminus, the 161-residue chain is 2-C-methyl-D-erythritol 2,4-cyclodiphosphate synthase (161 aa).

The a divalent metal cation site is built by Asp-10 and His-12. 4-CDP-2-C-methyl-D-erythritol 2-phosphate contacts are provided by residues 10 to 12 and 36 to 37; these read DVH and HS. A divalent metal cation is bound at residue His-44. 4-CDP-2-C-methyl-D-erythritol 2-phosphate is bound by residues 58–60, 63–67, and Arg-144; these read DIG and FSDTD.

The protein belongs to the IspF family. Homotrimer. The cofactor is a divalent metal cation.

It catalyses the reaction 4-CDP-2-C-methyl-D-erythritol 2-phosphate = 2-C-methyl-D-erythritol 2,4-cyclic diphosphate + CMP. It participates in isoprenoid biosynthesis; isopentenyl diphosphate biosynthesis via DXP pathway; isopentenyl diphosphate from 1-deoxy-D-xylulose 5-phosphate: step 4/6. Its function is as follows. Involved in the biosynthesis of isopentenyl diphosphate (IPP) and dimethylallyl diphosphate (DMAPP), two major building blocks of isoprenoid compounds. Catalyzes the conversion of 4-diphosphocytidyl-2-C-methyl-D-erythritol 2-phosphate (CDP-ME2P) to 2-C-methyl-D-erythritol 2,4-cyclodiphosphate (ME-CPP) with a corresponding release of cytidine 5-monophosphate (CMP). The chain is 2-C-methyl-D-erythritol 2,4-cyclodiphosphate synthase from Burkholderia ambifaria (strain ATCC BAA-244 / DSM 16087 / CCUG 44356 / LMG 19182 / AMMD) (Burkholderia cepacia (strain AMMD)).